We begin with the raw amino-acid sequence, 339 residues long: tRNA N6-adenosine threonylcarbamoyltransferase (339 aa).

Residues H114 and H118 each coordinate Fe cation. Residues 137 to 141, D170, G183, D187, and N277 contribute to the substrate site; that span reads VVSGG. Residue D305 coordinates Fe cation.

It belongs to the KAE1 / TsaD family. Fe(2+) serves as cofactor.

The protein resides in the cytoplasm. It catalyses the reaction L-threonylcarbamoyladenylate + adenosine(37) in tRNA = N(6)-L-threonylcarbamoyladenosine(37) in tRNA + AMP + H(+). Required for the formation of a threonylcarbamoyl group on adenosine at position 37 (t(6)A37) in tRNAs that read codons beginning with adenine. Is involved in the transfer of the threonylcarbamoyl moiety of threonylcarbamoyl-AMP (TC-AMP) to the N6 group of A37, together with TsaE and TsaB. TsaD likely plays a direct catalytic role in this reaction. The chain is tRNA N6-adenosine threonylcarbamoyltransferase from Clostridium perfringens (strain SM101 / Type A).